Here is a 419-residue protein sequence, read N- to C-terminus: Probable serine/threonine-protein kinase CST (419 aa).

Residue glycine 2 is the site of N-myristoyl glycine attachment. The S-palmitoyl cysteine moiety is linked to residue cysteine 4. The segment at 8-48 (FSSSSPSKTGLHSHATTNNHSNGTEFSSTTGATTNSSVGQQ) is disordered. Polar residues predominate over residues 15-48 (KTGLHSHATTNNHSNGTEFSSTTGATTNSSVGQQ). Residues 86-368 (FKPDSMLGQG…KEVVEVLEHI (283 aa)) form the Protein kinase domain. 92-100 (LGQGGFGKV) is an ATP binding site. At serine 117 the chain carries Phosphoserine. Residue lysine 124 coordinates ATP. Position 169 is a phosphotyrosine (tyrosine 169). Aspartate 218 serves as the catalytic Proton acceptor. Serine 222 carries the phosphoserine modification. 2 positions are modified to phosphothreonine: threonine 253 and threonine 258. Residue tyrosine 266 is modified to Phosphotyrosine. The span at 378–390 (SSTKQAVANSSRS) shows a compositional bias: polar residues. Positions 378 to 419 (SSTKQAVANSSRSSPHHYRYKAGALGAERKRATPGRFGSVEK) are disordered.

This sequence belongs to the protein kinase superfamily. Ser/Thr protein kinase family. In terms of assembly, interacts with SOBIR1/EVR and RLK5/HAE. Autophosphorylated on serine, threonine and tyrosine residues.

It localises to the cell membrane. The protein resides in the nucleus. The catalysed reaction is L-seryl-[protein] + ATP = O-phospho-L-seryl-[protein] + ADP + H(+). The enzyme catalyses L-threonyl-[protein] + ATP = O-phospho-L-threonyl-[protein] + ADP + H(+). Functionally, acts as a spatial inhibitor of signaling that modulates abscission zone cell adhesion and expansion. Acts both directly and indirectly by physically interacting with RLK5/HAE and SOBIR1/EVR at the cell surface. This Arabidopsis thaliana (Mouse-ear cress) protein is Probable serine/threonine-protein kinase CST.